Reading from the N-terminus, the 428-residue chain is Histone-lysine N-methyltransferase SMYD3 (428 aa).

M1 bears the N-acetylmethionine mark. One can recognise an SET domain in the interval L4–L240. Residue R14–N16 coordinates S-adenosyl-L-methionine. T22 bears the Phosphothreonine mark. Zn(2+)-binding residues include C49, C52, C62, C65, C71, C75, H83, and C87. Residues C49–C87 form an MYND-type zinc finger. S-adenosyl-L-methionine-binding positions include Y124, N132, N181, N205–H206, Y239, and F259. The segment at D272–S428 is C-terminal domain; essential for histone methyltransferase activity, nuclear localization and mediates interaction with HSP90AA1.

The protein belongs to the class V-like SAM-binding methyltransferase superfamily. Histone-lysine methyltransferase family. As to quaternary structure, interacts with HSPCA. Interacts with HELZ. Interacts with POLR2A; the interaction may be indirect and may be mediated by HELZ. Interacts with HSP90AA1; this interaction enhances SMYD3 histone-lysine N-methyltransferase. As to expression, expressed in skeletal muscles and testis. Overexpressed in a majority of colorectal and hepatocellular carcinomas.

It is found in the cytoplasm. It localises to the nucleus. The catalysed reaction is L-lysyl(4)-[histone H3] + 3 S-adenosyl-L-methionine = N(6),N(6),N(6)-trimethyl-L-lysyl(4)-[histone H3] + 3 S-adenosyl-L-homocysteine + 3 H(+). With respect to regulation, histone methyltransferase activity strongly stimulated by HSPCA. Functionally, histone methyltransferase. Specifically methylates 'Lys-4' of histone H3, inducing di- and tri-methylation, but not monomethylation. Also methylates 'Lys-5' of histone H4. Plays an important role in transcriptional activation as a member of an RNA polymerase complex. Binds DNA containing 5'-CCCTCC-3' or 5'-GAGGGG-3' sequences. The polypeptide is Histone-lysine N-methyltransferase SMYD3 (SMYD3) (Homo sapiens (Human)).